A 545-amino-acid chain; its full sequence is B3 domain-containing protein Os03g0620500 (545 aa).

Positions 26 to 119 form a DNA-binding region, TF-B3 1; sequence MKCFHRQMSA…RRASGVQERN (94 aa). A disordered region spans residues 111–188; the sequence is RASGVQERNA…SSSEHESSYD (78 aa). Positions 173–186 are enriched in basic and acidic residues; the sequence is EEAKESSSSEHESS. A DNA-binding region (TF-B3 2) is located at residues 231-331; it reads VTTMKHSNVN…RATVHLLRET (101 aa). Residues 368–400 are disordered; it reads RRGTMEPSTTNVKKEADNEQCNNGQGKRQEPLN. Residues 441–542 constitute a DNA-binding region (TF-B3 3); it reads YVSIMNKSNV…AMKVHIIRHN (102 aa).

Its subcellular location is the nucleus. In Oryza sativa subsp. japonica (Rice), this protein is B3 domain-containing protein Os03g0620500.